The chain runs to 110 residues: Parvalbumin alpha (110 aa).

At Ser2 the chain carries N-acetylserine. A phosphoserine mark is found at Ser2, Ser8, and Ser24. 2 EF-hand domains span residues 39 to 74 (KNPD…FSSD) and 78 to 110 (LSAK…VAES). Residues Asp52, Asp54, Ser56, Phe58, Glu60, Glu63, Asp91, Asp93, Asp95, Lys97, and Glu102 each coordinate Ca(2+).

In terms of tissue distribution, expressed in the modiolar nerve root (at protein level).

Its function is as follows. In muscle, parvalbumin is thought to be involved in relaxation after contraction. It binds two calcium ions. This Mus musculus (Mouse) protein is Parvalbumin alpha (Pvalb).